The following is a 123-amino-acid chain: Holo-[acyl-carrier-protein] synthase (123 aa).

Mg(2+)-binding residues include aspartate 9 and glutamate 57.

The protein belongs to the P-Pant transferase superfamily. AcpS family. It depends on Mg(2+) as a cofactor.

Its subcellular location is the cytoplasm. The catalysed reaction is apo-[ACP] + CoA = holo-[ACP] + adenosine 3',5'-bisphosphate + H(+). In terms of biological role, transfers the 4'-phosphopantetheine moiety from coenzyme A to a Ser of acyl-carrier-protein. The protein is Holo-[acyl-carrier-protein] synthase of Streptomyces avermitilis (strain ATCC 31267 / DSM 46492 / JCM 5070 / NBRC 14893 / NCIMB 12804 / NRRL 8165 / MA-4680).